Reading from the N-terminus, the 404-residue chain is Argininosuccinate synthase (404 aa).

ATP is bound by residues 9 to 17 (AYSGGLDTS) and alanine 36. Tyrosine 87 contacts L-citrulline. Residue glycine 117 coordinates ATP. Residues threonine 119, asparagine 123, and aspartate 124 each contribute to the L-aspartate site. Asparagine 123 contacts L-citrulline. Positions 127, 176, and 261 each coordinate L-citrulline.

Belongs to the argininosuccinate synthase family. Type 1 subfamily. In terms of assembly, homotetramer.

Its subcellular location is the cytoplasm. It carries out the reaction L-citrulline + L-aspartate + ATP = 2-(N(omega)-L-arginino)succinate + AMP + diphosphate + H(+). The protein operates within amino-acid biosynthesis; L-arginine biosynthesis; L-arginine from L-ornithine and carbamoyl phosphate: step 2/3. This chain is Argininosuccinate synthase, found in Burkholderia pseudomallei (strain K96243).